A 270-amino-acid polypeptide reads, in one-letter code: Probable feruloyl esterase C (270 aa).

A signal peptide spans 1–21 (MIKSIILQAIMVLSTLTSVHG). Residue N23 is glycosylated (N-linked (GlcNAc...) asparagine).

The protein belongs to the faeC family.

It localises to the secreted. It carries out the reaction feruloyl-polysaccharide + H2O = ferulate + polysaccharide.. Its function is as follows. Involved in degradation of plant cell walls. Hydrolyzes the feruloyl-arabinose ester bond in arabinoxylans, and the feruloyl-galactose ester bond in pectin. Active against paranitrophenyl-acetate, methyl ferulate and wheat arabinoxylan. In Aspergillus oryzae (strain ATCC 42149 / RIB 40) (Yellow koji mold), this protein is Probable feruloyl esterase C (faeC).